A 335-amino-acid polypeptide reads, in one-letter code: N-lysine methyltransferase KMT5A-A (335 aa).

Disordered regions lie at residues 1–91 (MGRG…EVEK) and 133–183 (LPPE…EIES). A compositionally biased stretch (basic and acidic residues) spans 67 to 91 (SVTHHESKCLGKPSTETRKKAEVEK). The span at 145 to 161 (VKNKPLRKKTQRQKSPN) shows a compositional bias: basic residues. The SET domain maps to 199–320 (EGIKMHMITG…VGEELLYDYG (122 aa)). Residues 209–211 (KGR), Tyr254, and 281–282 (NH) each bind S-adenosyl-L-methionine.

The protein belongs to the class V-like SAM-binding methyltransferase superfamily. Histone-lysine methyltransferase family. PR/SET subfamily.

Its subcellular location is the nucleus. It localises to the chromosome. It carries out the reaction L-lysyl(20)-[histone H4] + S-adenosyl-L-methionine = N(6)-methyl-L-lysyl(20)-[histone H4] + S-adenosyl-L-homocysteine + H(+). The catalysed reaction is L-lysyl-[protein] + S-adenosyl-L-methionine = N(6)-methyl-L-lysyl-[protein] + S-adenosyl-L-homocysteine + H(+). Protein-lysine N-methyltransferase that monomethylates both histones and non-histone proteins. Specifically monomethylates 'Lys-20' of histone H4 (H4K20me1). H4K20me1 is enriched during mitosis and represents a specific tag for epigenetic transcriptional repression. Mainly functions in euchromatin regions, thereby playing a central role in the silencing of euchromatic genes. Required for cell proliferation, probably by contributing to the maintenance of proper higher-order structure of DNA during mitosis. Involved in chromosome condensation and proper cytokinesis. The polypeptide is N-lysine methyltransferase KMT5A-A (Xenopus laevis (African clawed frog)).